The following is a 141-amino-acid chain: Transcription antitermination protein NusB (141 aa).

The protein belongs to the NusB family.

In terms of biological role, involved in transcription antitermination. Required for transcription of ribosomal RNA (rRNA) genes. Binds specifically to the boxA antiterminator sequence of the ribosomal RNA (rrn) operons. This is Transcription antitermination protein NusB from Fervidobacterium nodosum (strain ATCC 35602 / DSM 5306 / Rt17-B1).